Reading from the N-terminus, the 478-residue chain is Adenosylhomocysteinase (478 aa).

The substrate site is built by threonine 67, aspartate 144, and glutamate 204. Residue threonine 205–threonine 207 participates in NAD(+) binding. The substrate site is built by lysine 234 and aspartate 238. NAD(+)-binding positions include asparagine 239, glycine 268–glycine 273, glutamate 291, asparagine 326, isoleucine 347–histidine 349, and asparagine 392.

The protein belongs to the adenosylhomocysteinase family. It depends on NAD(+) as a cofactor.

The protein localises to the cytoplasm. The enzyme catalyses S-adenosyl-L-homocysteine + H2O = L-homocysteine + adenosine. It functions in the pathway amino-acid biosynthesis; L-homocysteine biosynthesis; L-homocysteine from S-adenosyl-L-homocysteine: step 1/1. In terms of biological role, may play a key role in the regulation of the intracellular concentration of adenosylhomocysteine. The sequence is that of Adenosylhomocysteinase from Nitrosomonas europaea (strain ATCC 19718 / CIP 103999 / KCTC 2705 / NBRC 14298).